The chain runs to 163 residues: Ribonuclease H (163 aa).

The 143-residue stretch at 4–146 folds into the RNase H type-1 domain; sequence SPKKVLIYTD…CDRLAVRASQ (143 aa). Mg(2+) contacts are provided by Asp-13, Glu-51, Asp-73, and Asp-138.

This sequence belongs to the RNase H family. In terms of assembly, monomer. It depends on Mg(2+) as a cofactor.

The protein localises to the cytoplasm. The enzyme catalyses Endonucleolytic cleavage to 5'-phosphomonoester.. In terms of biological role, endonuclease that specifically degrades the RNA of RNA-DNA hybrids. The sequence is that of Ribonuclease H from Rippkaea orientalis (strain PCC 8801 / RF-1) (Cyanothece sp. (strain PCC 8801)).